A 300-amino-acid polypeptide reads, in one-letter code: tRNA uridine(34) hydroxylase (300 aa).

The 95-residue stretch at 128–222 (ADPEVIVVDT…YLEDVPQAQS (95 aa)) folds into the Rhodanese domain. The active-site Cysteine persulfide intermediate is the Cys182.

It belongs to the TrhO family.

The enzyme catalyses uridine(34) in tRNA + AH2 + O2 = 5-hydroxyuridine(34) in tRNA + A + H2O. Functionally, catalyzes oxygen-dependent 5-hydroxyuridine (ho5U) modification at position 34 in tRNAs. This chain is tRNA uridine(34) hydroxylase, found in Deinococcus radiodurans (strain ATCC 13939 / DSM 20539 / JCM 16871 / CCUG 27074 / LMG 4051 / NBRC 15346 / NCIMB 9279 / VKM B-1422 / R1).